The primary structure comprises 685 residues: UvrABC system protein C (685 aa).

Residues 15 to 93 (ALPGVYRYFD…IKTQNPRFNI (79 aa)) enclose the GIY-YIG domain. Residues 214–249 (QELLQAMEARMMAYSGQLAFEQAAEVRNQMQALSRV) form the UVR domain. Positions 365–388 (AQGGDHAPAAQGGDPPPAASSGGH) are enriched in low complexity. The disordered stretch occupies residues 365-391 (AQGGDHAPAAQGGDPPPAASSGGHPLR).

This sequence belongs to the UvrC family. Interacts with UvrB in an incision complex.

It localises to the cytoplasm. The UvrABC repair system catalyzes the recognition and processing of DNA lesions. UvrC both incises the 5' and 3' sides of the lesion. The N-terminal half is responsible for the 3' incision and the C-terminal half is responsible for the 5' incision. The chain is UvrABC system protein C from Verminephrobacter eiseniae (strain EF01-2).